The sequence spans 136 residues: Small ribosomal subunit protein eS8 (136 aa).

The tract at residues Met1 to Val23 is disordered. A compositionally biased stretch (basic residues) spans Thr13 to Val23.

It belongs to the eukaryotic ribosomal protein eS8 family. As to quaternary structure, part of the 30S ribosomal subunit.

This chain is Small ribosomal subunit protein eS8, found in Hyperthermus butylicus (strain DSM 5456 / JCM 9403 / PLM1-5).